A 223-amino-acid chain; its full sequence is Thymidine kinase (223 aa).

Residues 19–26 (GPMFAGKT) and 96–99 (DEVQ) contribute to the ATP site. The active-site Proton acceptor is the E97. Zn(2+) is bound by residues C153, C156, C191, and H194.

This sequence belongs to the thymidine kinase family. Homotetramer.

It is found in the cytoplasm. It catalyses the reaction thymidine + ATP = dTMP + ADP + H(+). The sequence is that of Thymidine kinase from Ureaplasma parvum serovar 3 (strain ATCC 27815 / 27 / NCTC 11736).